The following is a 179-amino-acid chain: Shikimate kinase (179 aa).

Glycine 15 to serine 20 provides a ligand contact to ATP. Threonine 19 contributes to the Mg(2+) binding site. 3 residues coordinate substrate: aspartate 37, arginine 61, and glycine 83. ATP is bound at residue arginine 123. Substrate is bound at residue arginine 142.

This sequence belongs to the shikimate kinase family. Monomer. Mg(2+) is required as a cofactor.

It is found in the cytoplasm. The enzyme catalyses shikimate + ATP = 3-phosphoshikimate + ADP + H(+). Its pathway is metabolic intermediate biosynthesis; chorismate biosynthesis; chorismate from D-erythrose 4-phosphate and phosphoenolpyruvate: step 5/7. Catalyzes the specific phosphorylation of the 3-hydroxyl group of shikimic acid using ATP as a cosubstrate. In Coxiella burnetii (strain CbuG_Q212) (Coxiella burnetii (strain Q212)), this protein is Shikimate kinase.